We begin with the raw amino-acid sequence, 62 residues long: ATP synthase subunit epsilon, mitochondrial (62 aa).

At Thr-52 the chain carries Phosphothreonine.

This sequence belongs to the eukaryotic ATPase epsilon family. As to quaternary structure, F-type ATPases have 2 components, CF(1) - the catalytic core - and CF(0) - the membrane proton channel. CF(1) has five subunits: alpha(3), beta(3), gamma(1), delta(1), epsilon(1). CF(0) has three main subunits: a, b and c.

The protein resides in the mitochondrion. The protein localises to the mitochondrion inner membrane. Functionally, mitochondrial membrane ATP synthase (F(1)F(0) ATP synthase or Complex V) produces ATP from ADP in the presence of a proton gradient across the membrane which is generated by electron transport complexes of the respiratory chain. F-type ATPases consist of two structural domains, F(1) - containing the extramembraneous catalytic core, and F(0) - containing the membrane proton channel, linked together by a central stalk and a peripheral stalk. During catalysis, ATP synthesis in the catalytic domain of F(1) is coupled via a rotary mechanism of the central stalk subunits to proton translocation. Part of the complex F(1) domain and of the central stalk which is part of the complex rotary element. Rotation of the central stalk against the surrounding alpha(3)beta(3) subunits leads to hydrolysis of ATP in three separate catalytic sites on the beta subunits. The polypeptide is ATP synthase subunit epsilon, mitochondrial (ATP15) (Saccharomyces cerevisiae (strain ATCC 204508 / S288c) (Baker's yeast)).